The following is a 602-amino-acid chain: uncharacterized protein (602 aa).

One can recognise a Helicase ATP-binding domain in the interval 51–210; sequence QYLGTQPRDF…PFVSYQPDAD (160 aa). Basic and acidic residues predominate over residues 430–439; sequence PHRESAHDPL. Disordered regions lie at residues 430-452 and 518-538; these read PHRESAHDPLDGDPATRTQTERG and RAQLQKGATQPATSGASASVH. Residues 523-534 are compositionally biased toward polar residues; that stretch reads KGATQPATSGAS.

To M.leprae ML1624.

This is an uncharacterized protein from Mycobacterium tuberculosis (strain CDC 1551 / Oshkosh).